The primary structure comprises 50 residues: Large ribosomal subunit protein bL32c (50 aa).

Belongs to the bacterial ribosomal protein bL32 family.

The protein resides in the plastid. It localises to the chloroplast. The sequence is that of Large ribosomal subunit protein bL32c from Lotus japonicus (Lotus corniculatus var. japonicus).